The following is a 189-amino-acid chain: Leucine repeat adapter protein 25 (189 aa).

At serine 28 the chain carries Phosphoserine. Positions 55–81 (LSRAARAPDGPRHAAGSANLGSAAGPR) are disordered. Positions 68–79 (AAGSANLGSAAG) are enriched in low complexity. An LRR repeat occupies 86–114 (LDSALAALRKEMVGLRQLDMSLLCQLWGL). The tract at residues 141–174 (DSSYPPDAGLSDDDEPPDASLPPDPPPLTVPQTH) is disordered. Residues 159–169 (ASLPPDPPPLT) are compositionally biased toward pro residues. A Phosphoserine modification is found at serine 188.

This sequence belongs to the FAM89 family. Interacts with SKI. Interacts (via LRR repeat) with CDC42BPA (via AGC-kinase C-terminal domain) and CDC42BPB (via AGC-kinase C-terminal domain). Interacts (via LRR repeat) with LIMK1 (via LIM zinc-binding domains). Forms a tripartite complex with CDC42BPA, CDC42BPB and LIMK1.

The protein localises to the cytoplasm. It localises to the cell projection. Its subcellular location is the lamellipodium. Functionally, negatively regulates TGF-beta-induced signaling; in cooperation with SKI prevents the translocation of SMAD2 from the nucleus to the cytoplasm in response to TGF-beta. Acts as an adapter that mediates the specific recognition of LIMK1 by CDC42BPA and CDC42BPB in the lamellipodia. LRAP25-mediated CDC42BPA/CDC42BPB targeting to LIMK1 and the lamellipodium results in LIMK1 activation and the subsequent phosphorylation of CFL1 which is important for lamellipodial F-actin regulation. The protein is Leucine repeat adapter protein 25 of Rattus norvegicus (Rat).